A 357-amino-acid chain; its full sequence is Non-structural protein NS2 (357 aa).

2 disordered regions span residues 169-191 (PRLQ…DEAK) and 229-266 (DERD…HPKT). The span at 233–249 (EGDRDERGDEEQVKTLS) shows a compositional bias: basic and acidic residues. Residues 250 to 260 (DDDDQGEDASD) show a composition bias toward acidic residues.

This sequence belongs to the orbivirus non-structural protein NS2 family.

In terms of biological role, single-stranded RNA-binding protein. This chain is Non-structural protein NS2 (Segment-8), found in Antilocapra americana (Pronghorn).